A 407-amino-acid chain; its full sequence is Arginine biosynthesis bifunctional protein ArgJ (407 aa).

6 residues coordinate substrate: Thr157, Lys183, Thr194, Glu280, Asn402, and Thr407. Residue Thr194 is the Nucleophile of the active site.

The protein belongs to the ArgJ family. As to quaternary structure, heterotetramer of two alpha and two beta chains.

The protein resides in the cytoplasm. The enzyme catalyses N(2)-acetyl-L-ornithine + L-glutamate = N-acetyl-L-glutamate + L-ornithine. It carries out the reaction L-glutamate + acetyl-CoA = N-acetyl-L-glutamate + CoA + H(+). It functions in the pathway amino-acid biosynthesis; L-arginine biosynthesis; L-ornithine and N-acetyl-L-glutamate from L-glutamate and N(2)-acetyl-L-ornithine (cyclic): step 1/1. Its pathway is amino-acid biosynthesis; L-arginine biosynthesis; N(2)-acetyl-L-ornithine from L-glutamate: step 1/4. Functionally, catalyzes two activities which are involved in the cyclic version of arginine biosynthesis: the synthesis of N-acetylglutamate from glutamate and acetyl-CoA as the acetyl donor, and of ornithine by transacetylation between N(2)-acetylornithine and glutamate. The polypeptide is Arginine biosynthesis bifunctional protein ArgJ (Oceanobacillus iheyensis (strain DSM 14371 / CIP 107618 / JCM 11309 / KCTC 3954 / HTE831)).